The chain runs to 182 residues: Probable peptidyl-prolyl cis-trans isomerase A (182 aa).

A PPIase cyclophilin-type domain is found at 13-181; that stretch reads QNATATLHTN…EPVVIDSITI (169 aa). A disordered region spans residues 161–182; that stretch reads TTATDGNDRPTEPVVIDSITIS.

It belongs to the cyclophilin-type PPIase family.

It is found in the cytoplasm. The enzyme catalyses [protein]-peptidylproline (omega=180) = [protein]-peptidylproline (omega=0). Functionally, PPIases accelerate the folding of proteins. It catalyzes the cis-trans isomerization of proline imidic peptide bonds in oligopeptides. The polypeptide is Probable peptidyl-prolyl cis-trans isomerase A (ppiA) (Mycobacterium leprae (strain TN)).